The following is a 483-amino-acid chain: Isocitrate dehydrogenase [NADP] (483 aa).

Thr-74 contacts NADP(+). D-threo-isocitrate-binding residues include Ser-83, Asn-85, Arg-89, Arg-99, and Arg-121. Position 232 (Asp-232) interacts with Mg(2+). NADP(+) contacts are provided by residues 264–270 (HGSAPDI) and Asn-277.

Belongs to the isocitrate and isopropylmalate dehydrogenases family. As to quaternary structure, homodimer. Mg(2+) serves as cofactor. Requires Mn(2+) as cofactor.

It carries out the reaction D-threo-isocitrate + NADP(+) = 2-oxoglutarate + CO2 + NADPH. Catalyzes the oxidative decarboxylation of isocitrate to 2-oxoglutarate and carbon dioxide with the concomitant reduction of NADP(+). The sequence is that of Isocitrate dehydrogenase [NADP] (icd) from Rickettsia prowazekii (strain Madrid E).